Reading from the N-terminus, the 279-residue chain is 3-methyl-2-oxobutanoate hydroxymethyltransferase (279 aa).

Mg(2+) contacts are provided by D44 and D83. 3-methyl-2-oxobutanoate-binding positions include 44–45 (DS), D83, and K113. Residue E115 participates in Mg(2+) binding. The active-site Proton acceptor is E182.

The protein belongs to the PanB family. In terms of assembly, homodecamer; pentamer of dimers. Mg(2+) serves as cofactor.

Its subcellular location is the cytoplasm. It carries out the reaction 3-methyl-2-oxobutanoate + (6R)-5,10-methylene-5,6,7,8-tetrahydrofolate + H2O = 2-dehydropantoate + (6S)-5,6,7,8-tetrahydrofolate. It participates in cofactor biosynthesis; (R)-pantothenate biosynthesis; (R)-pantoate from 3-methyl-2-oxobutanoate: step 1/2. Catalyzes the reversible reaction in which hydroxymethyl group from 5,10-methylenetetrahydrofolate is transferred onto alpha-ketoisovalerate to form ketopantoate. This is 3-methyl-2-oxobutanoate hydroxymethyltransferase from Desulfotalea psychrophila (strain LSv54 / DSM 12343).